Reading from the N-terminus, the 286-residue chain is ATP synthase gamma chain (286 aa).

This sequence belongs to the ATPase gamma chain family. In terms of assembly, F-type ATPases have 2 components, CF(1) - the catalytic core - and CF(0) - the membrane proton channel. CF(1) has five subunits: alpha(3), beta(3), gamma(1), delta(1), epsilon(1). CF(0) has three main subunits: a, b and c.

It is found in the cell inner membrane. Functionally, produces ATP from ADP in the presence of a proton gradient across the membrane. The gamma chain is believed to be important in regulating ATPase activity and the flow of protons through the CF(0) complex. The protein is ATP synthase gamma chain of Flavobacterium psychrophilum (strain ATCC 49511 / DSM 21280 / CIP 103535 / JIP02/86).